Reading from the N-terminus, the 237-residue chain is Bax inhibitor 1 (237 aa).

Residues 1–29 (MNIFDRKINFDALLKFSHITPSTQQHLKK) lie on the Cytoplasmic side of the membrane. A Glycyl lysine isopeptide (Lys-Gly) (interchain with G-Cter in ubiquitin) cross-link involves residue Lys7. Residues 30-50 (VYASFALCMFVAAAGAYVHVV) form a helical membrane-spanning segment. The Lumenal portion of the chain corresponds to 51-52 (TR). Residues 53-73 (FIQAGLLSALGALALMICLMA) form a helical membrane-spanning segment. The Cytoplasmic portion of the chain corresponds to 74-86 (TPHSHETEQKRLG). A helical transmembrane segment spans residues 87 to 107 (LLAGFAFLTGVGLGPALELCI). Topologically, residues 108 to 112 (AINPS) are lumenal. The chain crosses the membrane as a helical span at residues 113-133 (ILPTAFMGTAMIFTCFSLSAL). Residues 134 to 139 (YARRRS) are Cytoplasmic-facing. Residues 140–160 (YLFLGGILMSAMSLMFVSSLG) traverse the membrane as a helical segment. Topologically, residues 161 to 166 (NLFFGS) are lumenal. The helical transmembrane segment at 167–187 (IWLFQANLYMGLLVMCGFVLF) threads the bilayer. Residues 188-206 (DTQLIIEKAEHGDKDYIWH) lie on the Cytoplasmic side of the membrane. Residues 207 to 227 (CIDLFLDFVTLFRKLMLILAF) constitute an intramembrane region (helical). Topologically, residues 228 to 237 (NEKDKKKEKK) are cytoplasmic.

It belongs to the BI1 family. As to quaternary structure, interacts with BCL2 and BCL2L1. Interacts with ERN1. Post-translationally, ubiquitinated by BFAR, leading to proteasomal degradation. In terms of tissue distribution, highly abundant in adult testis.

It localises to the endoplasmic reticulum membrane. Functionally, endoplasmic reticulum (ER)-resident protein that confers cellular protection as an anti-apoptotic protein by limiting multiple stress-inducing pathways surrounding the endoplasmic reticulum and mitochondria. Inhibits the activities of the key sensor for the endoplasmic reticulum unfolded protein response IRE1alpha/ERN1 both directly and by blocking BAX/BAK binding. Modulates ER calcium homeostasis by acting as a calcium-leak channel. Negatively regulates autophagy and autophagosome formation, especially during periods of nutrient deprivation, and reduces cell survival during starvation. This is Bax inhibitor 1 (Tmbim6) from Rattus norvegicus (Rat).